The following is a 160-amino-acid chain: E3 ubiquitin ligase complex SCF subunit sconC (160 aa).

An interaction with the F-box domain of F-box proteins region spans residues 101–160; it reads ILAANYLDIKALLDVGCKTVANMIKGKSPEEIRKTFNIQNDFTPEEEDQIRRENEWAEDR.

The protein belongs to the SKP1 family. In terms of assembly, component of the SCF (SKP1-CUL1-F-box protein) E3 ubiquitin ligase complexes.

The protein operates within protein modification; protein ubiquitination. In terms of biological role, essential component of the SCF (SKP1-CUL1-F-box protein) E3 ubiquitin ligase complexes, which mediate the ubiquitination and subsequent proteasomal degradation of target proteins. Controls sulfur metabolite repression, probably by mediating the inactivation or degradation of the metR transcription factor. This is E3 ubiquitin ligase complex SCF subunit sconC (sconC) from Talaromyces stipitatus (strain ATCC 10500 / CBS 375.48 / QM 6759 / NRRL 1006) (Penicillium stipitatum).